Reading from the N-terminus, the 512-residue chain is Ribose import ATP-binding protein RbsA 1 (512 aa).

ABC transporter domains lie at 8 to 244 and 254 to 502; these read FRME…IGRE and AHRG…LNIA. Residue 40–47 participates in ATP binding; sequence GENGAGKS.

Belongs to the ABC transporter superfamily. Ribose importer (TC 3.A.1.2.1) family. The complex is composed of an ATP-binding protein (RbsA), two transmembrane proteins (RbsC) and a solute-binding protein (RbsB).

It is found in the cell inner membrane. It catalyses the reaction D-ribose(out) + ATP + H2O = D-ribose(in) + ADP + phosphate + H(+). Functionally, part of the ABC transporter complex RbsABC involved in ribose import. Responsible for energy coupling to the transport system. The chain is Ribose import ATP-binding protein RbsA 1 from Rhizobium johnstonii (strain DSM 114642 / LMG 32736 / 3841) (Rhizobium leguminosarum bv. viciae).